The sequence spans 160 residues: Nucleotide-binding protein Tola_0795 (160 aa).

It belongs to the YajQ family.

Its function is as follows. Nucleotide-binding protein. The sequence is that of Nucleotide-binding protein Tola_0795 from Tolumonas auensis (strain DSM 9187 / NBRC 110442 / TA 4).